We begin with the raw amino-acid sequence, 551 residues long: MSRHFDRGSFRAVSDVHQLMSFPDFSASDAHVQWQRFNNLLWHHNDLGIWLDISRMHINAEDFERLGPRFDQAFKAMQALEQGAIANTDEQRMVGHYWLRQPQLAPDQEVCDHIAKEIDLIETFGSNVINGLIKAPNGKKFTDVLWIGIGGSGLGPLLMIRALQNAEQGLRFHFFDNVDPDGMSRVLGNLGDALSTTLVVTVSKSGATPEPHLGMEQARQRLEAMGGHWAGQAVAVTMLNSQLDQLAQKESWLKRFDMFDWVGGRTSITSAVGLLPAALIGCDIRAFLAGAAQMDEATRVSDLHSNPASLMAAAWFVAGDGLGRRDMVVLPYRDRLEVFSRYLQQLVMESLGKRLDRDGNVVHQGLAVYGNKGSTDQHAYVQQLRDGVDNFFATFIEVLEDVENIPAINNEHPGDFLDGFLQGTRAALSQGGRQSLTISMRRFDPRRLGALVALFERAVGLYGELVNINAYHQPGVESGKKAAAAILNLQSRVEDLLADGVERSAGEIHQVIGDGSEEAIFWIMRHLTANKRGYVAEGDWGIPTSLRFSKG.

Residue Glu-349 is the Proton donor of the active site. Active-site residues include His-378 and Lys-480.

The protein belongs to the GPI family.

The protein resides in the cytoplasm. It carries out the reaction alpha-D-glucose 6-phosphate = beta-D-fructose 6-phosphate. Its pathway is carbohydrate biosynthesis; gluconeogenesis. The protein operates within carbohydrate degradation; glycolysis; D-glyceraldehyde 3-phosphate and glycerone phosphate from D-glucose: step 2/4. Its function is as follows. Catalyzes the reversible isomerization of glucose-6-phosphate to fructose-6-phosphate. This is Glucose-6-phosphate isomerase from Prochlorococcus marinus (strain MIT 9313).